The sequence spans 346 residues: Aspartate-semialdehyde dehydrogenase (346 aa).

NADP(+)-binding positions include 12 to 15 (SGAV) and 40 to 41 (RS). Residue Arg101 coordinates phosphate. Cys131 serves as the catalytic Acyl-thioester intermediate. Gln158 contributes to the substrate binding site. 161–162 (SG) contacts NADP(+). A phosphate-binding site is contributed by Lys225. Arg246 is a substrate binding site. His253 functions as the Proton acceptor in the catalytic mechanism. Position 326 (Gln326) interacts with NADP(+).

The protein belongs to the aspartate-semialdehyde dehydrogenase family. Homodimer.

The catalysed reaction is L-aspartate 4-semialdehyde + phosphate + NADP(+) = 4-phospho-L-aspartate + NADPH + H(+). It participates in amino-acid biosynthesis; L-lysine biosynthesis via DAP pathway; (S)-tetrahydrodipicolinate from L-aspartate: step 2/4. It functions in the pathway amino-acid biosynthesis; L-methionine biosynthesis via de novo pathway; L-homoserine from L-aspartate: step 2/3. The protein operates within amino-acid biosynthesis; L-threonine biosynthesis; L-threonine from L-aspartate: step 2/5. Catalyzes the NADPH-dependent formation of L-aspartate-semialdehyde (L-ASA) by the reductive dephosphorylation of L-aspartyl-4-phosphate. This is Aspartate-semialdehyde dehydrogenase from Helicobacter pylori (strain J99 / ATCC 700824) (Campylobacter pylori J99).